Consider the following 505-residue polypeptide: Bifunctional pantoate ligase/cytidylate kinase (505 aa).

The pantoate--beta-alanine ligase stretch occupies residues Met-1–Thr-268. Position 18-25 (Met-18–His-25) interacts with ATP. The active-site Proton donor is His-25. Gln-53 serves as a coordination point for (R)-pantoate. Gln-53 contributes to the beta-alanine binding site. Gly-142–Asp-145 is an ATP binding site. Gln-148 serves as a coordination point for (R)-pantoate. ATP is bound by residues Val-171 and Cys-179 to Arg-182. The interval Phe-269–Arg-505 is cytidylate kinase.

This sequence in the N-terminal section; belongs to the pantothenate synthetase family. The protein in the C-terminal section; belongs to the cytidylate kinase family. Type 1 subfamily.

The protein localises to the cytoplasm. It catalyses the reaction (R)-pantoate + beta-alanine + ATP = (R)-pantothenate + AMP + diphosphate + H(+). It carries out the reaction CMP + ATP = CDP + ADP. The enzyme catalyses dCMP + ATP = dCDP + ADP. It functions in the pathway cofactor biosynthesis; (R)-pantothenate biosynthesis; (R)-pantothenate from (R)-pantoate and beta-alanine: step 1/1. Its function is as follows. Catalyzes the condensation of pantoate with beta-alanine in an ATP-dependent reaction via a pantoyl-adenylate intermediate. Catalyzes the transfer of a phosphate group from ATP to either CMP or dCMP to form CDP or dCDP and ADP, respectively. This chain is Bifunctional pantoate ligase/cytidylate kinase, found in Prochlorococcus marinus (strain MIT 9313).